The primary structure comprises 207 residues: Holliday junction branch migration complex subunit RuvA (207 aa).

The tract at residues 1–65 (MYDYIRGVLT…ETEHVLYGFH (65 aa)) is domain I. The segment at 66–144 (TRGERECFRM…DLLPLDAQIL (79 aa)) is domain II. The interval 145-155 (ASWEPAKPSCM) is flexible linker. The interval 155–207 (MEEGIQALAALGYPKSSAERMIAEAMSELPDHASVAEILPIALKKNLQGLNKI) is domain III.

Belongs to the RuvA family. In terms of assembly, homotetramer. Forms an RuvA(8)-RuvB(12)-Holliday junction (HJ) complex. HJ DNA is sandwiched between 2 RuvA tetramers; dsDNA enters through RuvA and exits via RuvB. An RuvB hexamer assembles on each DNA strand where it exits the tetramer. Each RuvB hexamer is contacted by two RuvA subunits (via domain III) on 2 adjacent RuvB subunits; this complex drives branch migration. In the full resolvosome a probable DNA-RuvA(4)-RuvB(12)-RuvC(2) complex forms which resolves the HJ.

The protein localises to the cytoplasm. Its function is as follows. The RuvA-RuvB-RuvC complex processes Holliday junction (HJ) DNA during genetic recombination and DNA repair, while the RuvA-RuvB complex plays an important role in the rescue of blocked DNA replication forks via replication fork reversal (RFR). RuvA specifically binds to HJ cruciform DNA, conferring on it an open structure. The RuvB hexamer acts as an ATP-dependent pump, pulling dsDNA into and through the RuvAB complex. HJ branch migration allows RuvC to scan DNA until it finds its consensus sequence, where it cleaves and resolves the cruciform DNA. The protein is Holliday junction branch migration complex subunit RuvA of Chlamydia abortus (strain DSM 27085 / S26/3) (Chlamydophila abortus).